Reading from the N-terminus, the 172-residue chain is Large ribosomal subunit protein uL10 (172 aa).

It belongs to the universal ribosomal protein uL10 family. Part of the ribosomal stalk of the 50S ribosomal subunit. The N-terminus interacts with L11 and the large rRNA to form the base of the stalk. The C-terminus forms an elongated spine to which L12 dimers bind in a sequential fashion forming a multimeric L10(L12)X complex.

Forms part of the ribosomal stalk, playing a central role in the interaction of the ribosome with GTP-bound translation factors. This chain is Large ribosomal subunit protein uL10, found in Parvibaculum lavamentivorans (strain DS-1 / DSM 13023 / NCIMB 13966).